A 308-amino-acid chain; its full sequence is Ribosomal protein L11 methyltransferase (308 aa).

S-adenosyl-L-methionine is bound by residues Thr148, Gly169, Asp191, and Asn239.

This sequence belongs to the methyltransferase superfamily. PrmA family.

Its subcellular location is the cytoplasm. The catalysed reaction is L-lysyl-[protein] + 3 S-adenosyl-L-methionine = N(6),N(6),N(6)-trimethyl-L-lysyl-[protein] + 3 S-adenosyl-L-homocysteine + 3 H(+). Functionally, methylates ribosomal protein L11. This chain is Ribosomal protein L11 methyltransferase, found in Psychrobacter arcticus (strain DSM 17307 / VKM B-2377 / 273-4).